A 124-amino-acid chain; its full sequence is Large ribosomal subunit protein bL12 (124 aa).

This sequence belongs to the bacterial ribosomal protein bL12 family. In terms of assembly, homodimer. Part of the ribosomal stalk of the 50S ribosomal subunit. Forms a multimeric L10(L12)X complex, where L10 forms an elongated spine to which 2 to 4 L12 dimers bind in a sequential fashion. Binds GTP-bound translation factors.

Forms part of the ribosomal stalk which helps the ribosome interact with GTP-bound translation factors. Is thus essential for accurate translation. The chain is Large ribosomal subunit protein bL12 from Campylobacter fetus subsp. fetus (strain 82-40).